The following is a 490-amino-acid chain: Sushi domain-containing protein 4 (490 aa).

The disordered stretch occupies residues 1–20 (MYHGMNPSNGDGFLEQQLQQ). Residues 1-41 (MYHGMNPSNGDGFLEQQLQQQQPQSPQRLLAVILWFQLALC) form the signal peptide. Over 42–319 (FGPAQLTGGF…PSTHETLLTT (278 aa)) the chain is Extracellular. Sushi domains lie at 55-119 (NVCA…VCIQ), 120-179 (EDCR…ICQG), 178-239 (QGCL…RCLA), and 241-304 (EVCP…YCIK). Intrachain disulfides connect C57–C99, C85–C117, C122–C165, C147–C177, C180–C224, C210–C237, C243–C289, and C274–C302. N-linked (GlcNAc...) asparagine glycans are attached at residues N104 and N134. N192 is a glycosylation site (N-linked (GlcNAc...) asparagine). Residues 320–340 (WKIVAFTATSVLLVLLLVILA) form a helical membrane-spanning segment. Topologically, residues 341 to 490 (RMFQTKFKAH…DEIPLMEEDP (150 aa)) are cytoplasmic. The segment at 394 to 490 (YPASVGQGCP…DEIPLMEEDP (97 aa)) is disordered. Composition is skewed to polar residues over residues 430–444 (CDST…QSLY) and 461–475 (DTIS…STSP). Positions 479 to 490 (IADEIPLMEEDP) are enriched in acidic residues.

High expression in brain and eye, with weaker expression in spinal cord and testis. Detected in white matter of brain and in the outer segments of photoreceptors.

Its subcellular location is the membrane. Its function is as follows. Acts as a complement inhibitor by disrupting the formation of the classical C3 convertase. Isoform 3 inhibits the classical complement pathway, while membrane-bound isoform 1 inhibits deposition of C3b via both the classical and alternative complement pathways. The protein is Sushi domain-containing protein 4 (Susd4) of Mus musculus (Mouse).